We begin with the raw amino-acid sequence, 752 residues long: BCLAF1 and THRAP3 family member 3 (752 aa).

The span at 1-13 (MARSRSRSPRWKQ) shows a compositional bias: basic residues. Disordered regions lie at residues 1-114 (MARS…YMPT), 132-177 (PTVQ…QMSL), and 190-252 (DELR…DPAR). A phosphoserine mark is found at Ser15 and Ser17. The segment covering 23-57 (FEYHEERHFHGHYDPEYRHDQQRPFTWRMDDEKHG) has biased composition (basic and acidic residues). A phosphoserine mark is found at Ser78 and Ser80. A compositionally biased stretch (basic and acidic residues) spans 85 to 109 (PVEKFDTYKPHQEYFPGRGDDDRRS). Residues 190–199 (DELRHQRVQE) are compositionally biased toward basic and acidic residues. Ser205 bears the Phosphoserine mark. 2 stretches are compositionally biased toward basic and acidic residues: residues 222–231 (RYPEDHDFRK) and 238–252 (RPTDAARYENRDPAR). Lys416 is covalently cross-linked (Glycyl lysine isopeptide (Lys-Gly) (interchain with G-Cter in SUMO2)). At Ser592 the chain carries Phosphoserine.

This sequence belongs to the BCLAF1/THRAP3 family.

The protein localises to the mitochondrion. The polypeptide is BCLAF1 and THRAP3 family member 3 (Mus musculus (Mouse)).